The chain runs to 109 residues: Spermidine export protein MdtI (109 aa).

The next 4 membrane-spanning stretches (helical) occupy residues 6–26 (WWHA…NILL), 36–56 (WMGI…AQAV), 63–83 (IAYA…GWIM), and 88–108 (LNYK…MIKM).

This sequence belongs to the drug/metabolite transporter (DMT) superfamily. Small multidrug resistance (SMR) (TC 2.A.7.1) family. MdtI subfamily. As to quaternary structure, forms a complex with MdtJ.

It localises to the cell inner membrane. In terms of biological role, catalyzes the excretion of spermidine. The chain is Spermidine export protein MdtI from Photorhabdus laumondii subsp. laumondii (strain DSM 15139 / CIP 105565 / TT01) (Photorhabdus luminescens subsp. laumondii).